We begin with the raw amino-acid sequence, 706 residues long: Translation factor GUF1 homolog, mitochondrial (706 aa).

In terms of domain architecture, tr-type G spans 89-272 (SRIRNFSIIA…SIVKNVPPPQ (184 aa)). GTP-binding positions include 98–105 (AHIDHGKS), 165–169 (DTPGH), and 219–222 (NKID).

The protein belongs to the TRAFAC class translation factor GTPase superfamily. Classic translation factor GTPase family. LepA subfamily.

Its subcellular location is the mitochondrion inner membrane. The enzyme catalyses GTP + H2O = GDP + phosphate + H(+). Functionally, promotes mitochondrial protein synthesis. May act as a fidelity factor of the translation reaction, by catalyzing a one-codon backward translocation of tRNAs on improperly translocated ribosomes. Binds to mitochondrial ribosomes in a GTP-dependent manner. This chain is Translation factor GUF1 homolog, mitochondrial, found in Thalassiosira pseudonana (Marine diatom).